Consider the following 236-residue polypeptide: uncharacterized protein (236 aa).

Residues 1 to 69 (MLKYQQIATE…RGSGIFVRKH (69 aa)) form the HTH gntR-type domain. The H-T-H motif DNA-binding region spans 29-48 (LETLMAQFEVSKSTITKSLE).

This is an uncharacterized protein from Bacillus subtilis (strain 168).